A 78-amino-acid polypeptide reads, in one-letter code: Large ribosomal subunit protein bL28 (78 aa).

Residues 1 to 30 (MAAHCQVTGAQPGFGHSISHSHRRTKRRWN) form a disordered region. The segment covering 19-30 (SHSHRRTKRRWN) has biased composition (basic residues).

It belongs to the bacterial ribosomal protein bL28 family.

This is Large ribosomal subunit protein bL28 from Kocuria rhizophila (strain ATCC 9341 / DSM 348 / NBRC 103217 / DC2201).